The sequence spans 112 residues: Photosystem II reaction center Psb28 protein (112 aa).

The protein belongs to the Psb28 family. In terms of assembly, part of the photosystem II complex.

The protein localises to the cellular thylakoid membrane. This Synechococcus elongatus (strain ATCC 33912 / PCC 7942 / FACHB-805) (Anacystis nidulans R2) protein is Photosystem II reaction center Psb28 protein.